The following is a 122-amino-acid chain: Large ribosomal subunit protein uL14 (122 aa).

This sequence belongs to the universal ribosomal protein uL14 family. As to quaternary structure, part of the 50S ribosomal subunit. Forms a cluster with proteins L3 and L19. In the 70S ribosome, L14 and L19 interact and together make contacts with the 16S rRNA in bridges B5 and B8.

In terms of biological role, binds to 23S rRNA. Forms part of two intersubunit bridges in the 70S ribosome. In Clostridium perfringens (strain ATCC 13124 / DSM 756 / JCM 1290 / NCIMB 6125 / NCTC 8237 / Type A), this protein is Large ribosomal subunit protein uL14.